We begin with the raw amino-acid sequence, 222 residues long: ATP-dependent dethiobiotin synthetase BioD 2 (222 aa).

A Mg(2+)-binding site is contributed by Thr-17. Lys-38 is an active-site residue. Thr-42 serves as a coordination point for substrate. Asp-55 and Glu-112 together coordinate Mg(2+). Residues Asp-55, 112–115 (EGCG), 172–173 (NR), 201–203 (PYL), and Glu-208 each bind ATP.

Belongs to the dethiobiotin synthetase family. Homodimer. Requires Mg(2+) as cofactor.

It is found in the cytoplasm. It catalyses the reaction (7R,8S)-7,8-diammoniononanoate + CO2 + ATP = (4R,5S)-dethiobiotin + ADP + phosphate + 3 H(+). Its pathway is cofactor biosynthesis; biotin biosynthesis; biotin from 7,8-diaminononanoate: step 1/2. Functionally, catalyzes a mechanistically unusual reaction, the ATP-dependent insertion of CO2 between the N7 and N8 nitrogen atoms of 7,8-diaminopelargonic acid (DAPA, also called 7,8-diammoniononanoate) to form a ureido ring. This chain is ATP-dependent dethiobiotin synthetase BioD 2, found in Yersinia pestis.